The following is a 341-amino-acid chain: Short chain dehydrogenase FGM9 (341 aa).

NADP(+) is bound by residues Leu-38, Lys-63, Asp-88, and Asn-114. Residues Ser-167 and Tyr-200 each act as proton donor in the active site. Positions 200 and 204 each coordinate NADP(+). Catalysis depends on Lys-204, which acts as the Lowers pKa of active site Tyr.

It belongs to the short-chain dehydrogenases/reductases (SDR) family.

It functions in the pathway secondary metabolite biosynthesis. Functionally, short chain dehydrogenase; part of the Fg3_54/C64 gene cluster that mediates the biosynthesis of the octapeptide fusaoctaxin A, a virulence factor that is required for cell-to-cell invasiveness of plant host. The 2 nonribosomal peptide synthetases NRPS9 and NRPS5 form an assembly line which likely utilizes GABA as a starter unit (loaded on the unique module M1 of NRPS9) and sequentially incorporates seven extender units composed of the residues L-Ala, L-allo-Ile, L-Ser, L-Val, L-Ser, L-Leu and L-Leu, respectively. During the process, each of the residues that are tethered on modules M3-M7 of NRPS5 containing an E domain can undergo an epimerization reaction to produce a D-configuration before the transpeptidation reaction occurs. The elongation of the peptidyl chain might be terminated by module M8-mediated L-Leu incorporation, followed by R domain-catalyzed 4 electron reduction to release the resulting octapeptide from the assembly line as an alcohol. Fusaoctaxin A is cleaved by the cluster specific ABC transporter FGM5 to the pentapeptide fusapentaxin A and the tripeptide fusatrixin A. The other enzymes from the cluster, FGM1, FGM2, FGM3 and FGM9 seem not to be involved in the biosynthesis of fusaoctaxin A and their functions have still to be determined. This is Short chain dehydrogenase FGM9 from Gibberella zeae (strain ATCC MYA-4620 / CBS 123657 / FGSC 9075 / NRRL 31084 / PH-1) (Wheat head blight fungus).